An 89-amino-acid polypeptide reads, in one-letter code: Cell division topological specificity factor (89 aa).

Belongs to the MinE family.

In terms of biological role, prevents the cell division inhibition by proteins MinC and MinD at internal division sites while permitting inhibition at polar sites. This ensures cell division at the proper site by restricting the formation of a division septum at the midpoint of the long axis of the cell. The protein is Cell division topological specificity factor of Brucella anthropi (strain ATCC 49188 / DSM 6882 / CCUG 24695 / JCM 21032 / LMG 3331 / NBRC 15819 / NCTC 12168 / Alc 37) (Ochrobactrum anthropi).